The chain runs to 2647 residues: Filamin-A (2647 aa).

Low complexity predominate over residues 1–15 (MSSSHSRAGQSAAGA). The tract at residues 1-39 (MSSSHSRAGQSAAGAAPGGGVDTRDAEMPATEKDLAEDA) is disordered. At Ser2 the chain carries N-acetylserine. Positions 2–274 (SSSHSRAGQS…PKAKLKPGAP (273 aa)) are actin-binding. A Phosphoserine modification is found at Ser11. Over residues 22–39 (DTRDAEMPATEKDLAEDA) the composition is skewed to basic and acidic residues. Residues Lys42, Lys43, and Lys135 each participate in a glycyl lysine isopeptide (Lys-Gly) (interchain with G-Cter in ubiquitin) cross-link. 2 consecutive Calponin-homology (CH) domains span residues 43–149 (KIQQ…LHYS) and 166–269 (QTPK…KAKL). A disordered region spans residues 271–294 (PGAPLRPKLNPKKARAYGPGIEPT). 15 Filamin repeats span residues 276 to 374 (RPKL…EVYV), 376 to 474 (KSQG…TVTV), 475 to 570 (GQAC…EVKV), 571 to 663 (GTEC…MADI), 667 to 763 (PQDF…RVNV), 764 to 866 (GAGS…RVKV), 867 to 965 (EPSH…SVAV), 966 to 1061 (SPSL…PLEA), 1062 to 1154 (VAPT…KAHV), 1155 to 1249 (VPCF…KLQV), 1250 to 1349 (EPAV…QVPV), 1350 to 1442 (TEGC…KVPV), 1443 to 1539 (HDVT…KVKV), 1540 to 1636 (LPTH…RVRA), and 1649 to 1740 (VSIG…QVTA). Lys299 participates in a covalent cross-link: Glycyl lysine isopeptide (Lys-Gly) (interchain with G-Cter in SUMO1); alternate. Residue Lys299 forms a Glycyl lysine isopeptide (Lys-Gly) (interchain with G-Cter in SUMO2); alternate linkage. Residues Lys376 and Lys508 each carry the N6-acetyllysine modification. Lys700, Lys781, Lys837, Lys865, and Lys906 each carry N6-acetyllysine. Residues Ser968 and Ser1055 each carry the phosphoserine modification. Lys1071 is modified (N6-acetyllysine; alternate). Position 1071 is an N6-succinyllysine; alternate (Lys1071). Residues Ser1081 and Ser1084 each carry the phosphoserine modification. Thr1089 is modified (phosphothreonine). Phosphoserine occurs at positions 1301 and 1338. Residues 1361–1382 (HGPGIQSGTTNKPNKFTVETRG) form a disordered region. An N6-acetyllysine modification is found at Lys1372. 2 positions are modified to phosphoserine: Ser1459 and Ser1533. The interaction with furin stretch occupies residues 1490–1607 (PKGLVEPVDV…DNHDGTYTVA (118 aa)). An N6-acetyllysine modification is found at Lys1538. Phosphoserine occurs at positions 1630 and 1734. Positions 1741–1778 (LAGDQPSVQPPLRSQQLAPQYTYAQGGQQTWAPERPLV) are hinge 1. 8 Filamin repeats span residues 1779 to 1860 (GVNG…QFYV), 1861 to 1950 (DYVN…PFTA), 1951 to 2039 (RVTG…PVVI), 2042 to 2131 (SEIG…SPFS), 2132 to 2230 (VKVT…QFTV), 2233 to 2325 (LGEG…VVPV), 2327 to 2420 (SPSG…KIRV), and 2424 to 2516 (GHGG…KAKV). Residue Ser1835 is modified to Phosphoserine. Ser1967, Ser2053, Ser2128, Ser2152, Ser2158, Ser2163, Ser2180, Ser2284, Ser2327, and Ser2329 each carry phosphoserine. At Thr2336 the chain carries Phosphothreonine. Phosphoserine is present on residues Ser2338, Ser2370, Ser2414, Ser2510, Ser2523, and Ser2526. Positions 2517–2551 (TGPRLVSNHSLHETSSVFVDSLTKATCAPQHGAPG) are hinge 2. Positions 2517 to 2647 (TGPRLVSNHS…PGSPYRVVVP (131 aa)) are self-association site, tail. The Filamin 24 repeat unit spans residues 2552 to 2646 (PGPADASKVV…IPGSPYRVVV (95 aa)). Lys2569 carries the post-translational modification N6-acetyllysine; alternate. Lys2569 carries the N6-succinyllysine; alternate modification. N6-acetyllysine is present on Lys2575. Phosphothreonine is present on Thr2599. Lys2607 and Lys2621 each carry N6-acetyllysine.

Belongs to the filamin family. In terms of assembly, homodimer. Interacts with PDLIM2. Interacts with RFLNA and RFLNB. Interacts with FCGR1A, FLNB, FURIN, HSPB7, INPPL1, KCND2, MYOT, MYOZ1, ARHGAP24, PSEN1, PSEN2 and ECSCR. Also interacts with various other binding partners in addition to filamentous actin. Interacts (via N-terminus) with MIS18BP1 (via N-terminus). Interacts (via N-terminus) with TAF1B. Interacts with TMEM67 (via C-terminus) and MKS1. Interacts (via actin-binding domain) with MICALL2 (via CH domain). Interacts (via filamin repeat 5) with SYK; docks SYK to the plasma membrane. Interacts (via filamin repeats 19 and 21) with DRD3; increased PKA-mediated phosphorylation at Ser-2152. Interacts (via filamin repeat 21) with MAS1, AGTR1 and ADRA1D; increases PKA-mediated phosphorylation of FLNA at Ser-2152. Interacts (via filamin repeats 4, 9, 12, 17, 19, 21, and 23) with GP1BA (high affinity), ITGB7, ITGB2 and FBLIM1. Interacts with CEACAM1 (via cytoplasmic domain); inhibits cell migration and cell scattering by interfering with the interaction between FLNA and RALA. Interacts with FOXC1. Interacts (via calponin-homology (CH) domain 1 and filamin repeat 24) with CRMP1; the interaction alters FLNA ternary structure and thus promotes FLNA dissociation from F-actin. Interacts with DPYSL3/CRMP3 and DPYSL4/CRMP4. Interacts with integrin ITGB1 isoform 1/beta-1A and isoform 5/beta-1D. Interacts with LUZP1; the interaction is not necessary for colocalization of LUZP1 with F-actin. Post-translationally, phosphorylation at Ser-2152 is negatively regulated by the autoinhibited conformation of filamin repeats 19-21. Ligand binding induces a conformational switch triggering phosphorylation at Ser-2152 by PKA. Phosphorylation extent changes in response to cell activation. In terms of processing, polyubiquitination in the CH1 domain by a SCF-like complex containing ASB2 leads to proteasomal degradation. Prior dissociation from actin may be required to expose the target lysines. Ubiquitinated in endothelial cells by RNF213 downstream of the non-canonical Wnt signaling pathway, leading to its degradation by the proteasome. In terms of tissue distribution, ubiquitous.

It is found in the cytoplasm. The protein resides in the cell cortex. Its subcellular location is the cytoskeleton. The protein localises to the perikaryon. It localises to the cell projection. It is found in the growth cone. The protein resides in the podosome. In terms of biological role, promotes orthogonal branching of actin filaments and links actin filaments to membrane glycoproteins. Anchors various transmembrane proteins to the actin cytoskeleton and serves as a scaffold for a wide range of cytoplasmic signaling proteins. Interaction with FLNB may allow neuroblast migration from the ventricular zone into the cortical plate. Tethers cell surface-localized furin, modulates its rate of internalization and directs its intracellular trafficking. Involved in ciliogenesis. Plays a role in cell-cell contacts and adherens junctions during the development of blood vessels, heart and brain organs. Plays a role in platelets morphology through interaction with SYK that regulates ITAM- and ITAM-like-containing receptor signaling, resulting in by platelet cytoskeleton organization maintenance. During the axon guidance process, required for growth cone collapse induced by SEMA3A-mediated stimulation of neurons. The sequence is that of Filamin-A (FLNA) from Homo sapiens (Human).